The chain runs to 592 residues: Sodium- and chloride-dependent transporter XTRP3A (592 aa).

At 1-7 (MEKARPQ) the chain is on the cytoplasmic side. Residues 8 to 28 (WGHPLQFVFACISYAVGLGNV) traverse the membrane as a helical segment. Topologically, residues 29 to 42 (WRFPYLCQMYGGGS) are extracellular. A helical transmembrane segment spans residues 43–63 (FLVPYIIMLIVEGMPLLYLEL). Residues 64–79 (AVGQRMRQGSIGAWRT) are Cytoplasmic-facing. Residues 80 to 100 (ISPYLSGVGVASVVVSFFLSM) traverse the membrane as a helical segment. The Extracellular segment spans residues 101–165 (YYNVINAWGF…ISPSIQENGG (65 aa)). Asn-131 carries N-linked (GlcNAc...) asparagine glycosylation. The chain crosses the membrane as a helical span at residues 166–186 (VQWEPALCLTLAWLMVYLCIL). The Cytoplasmic portion of the chain corresponds to 187 to 194 (RGTESTGK). A helical transmembrane segment spans residues 195-215 (VVYFTASMPYCVLIIYLVRGL). Residues 216–241 (TLHGATNGLMYMFTPKMEQLANPKAW) lie on the Extracellular side of the membrane. Residues 242–262 (INAATQIFFSLGLGFGSLIAF) traverse the membrane as a helical segment. Over 263–276 (ASYNEPSNNCQKHA) the chain is Cytoplasmic. A helical membrane pass occupies residues 277–297 (IIVSIINSSTSIFASIVTFSI). Over 298–389 (YGFKATFNYE…EAIKNMEVSQ (92 aa)) the chain is Extracellular. Residues 390–410 (LWSVLYFFMLLMLGIGSMLGN) form a helical membrane-spanning segment. Topologically, residues 411-431 (TAAILTPLTDSKVISSYLPKE) are cytoplasmic. Residues 432–452 (AISGLVCLINCAVGMVFTMEA) form a helical membrane-spanning segment. The Extracellular portion of the chain corresponds to 453–465 (GNYWFDIFNDYAA). Residues 466–486 (TLSLLLIVLVETIAVCYVYGL) traverse the membrane as a helical segment. Residues 487–504 (KRFESDLRAMTGRTLSWY) are Cytoplasmic-facing. The helical transmembrane segment at 505–525 (WKVMWAFVSPLLIVGLFIFYL) threads the bilayer. The Extracellular segment spans residues 526-554 (SDYILTGTLQYQAWDATQGQLVTKDYPPH). A helical membrane pass occupies residues 555-575 (ALAVIGLLVASSTMCIPLVAL). Topologically, residues 576-592 (GTFIRNRLKRGGSAPVA) are cytoplasmic.

The protein belongs to the sodium:neurotransmitter symporter (SNF) (TC 2.A.22) family. SLC6A20 subfamily. As to expression, expressed in brain, kidney, small intestine, thymus, spleen and lung. In the brain, expressed in cerebellum, cortex and brain stem. Not detected in liver, muscle or heart. In brain, widespread in various regions, including the meninges, choroid plexus, cortex, hippocampus and thalamus.

The protein resides in the apical cell membrane. It catalyses the reaction L-proline(out) + chloride(out) + 2 Na(+)(out) = L-proline(in) + chloride(in) + 2 Na(+)(in). The enzyme catalyses 4-hydroxy-L-proline(out) + chloride(out) + 2 Na(+)(out) = 4-hydroxy-L-proline(in) + chloride(in) + 2 Na(+)(in). It carries out the reaction 2-methyl-2-(methylamino)propanoate(out) + chloride(out) + 2 Na(+)(out) = 2-methyl-2-(methylamino)propanoate(in) + chloride(in) + 2 Na(+)(in). The catalysed reaction is L-pipecolate(out) + chloride(out) + 2 Na(+)(out) = L-pipecolate(in) + chloride(in) + 2 Na(+)(in). It catalyses the reaction glycine betaine(out) + chloride(out) + 2 Na(+)(out) = glycine betaine(in) + chloride(in) + 2 Na(+)(in). The enzyme catalyses glycine(out) + chloride(out) + 2 Na(+)(out) = glycine(in) + chloride(in) + 2 Na(+)(in). In terms of biological role, mediates the Na(+)- and Cl(-)-dependent uptake of imino acids such as L-proline, N-methyl-L-proline and pipecolate as well as N-methylated amino acids. Also transports glycine, regulates proline and glycine homeostasis in the brain playing a role in the modulation of NMDAR currents. This is Sodium- and chloride-dependent transporter XTRP3A from Mus musculus (Mouse).